Reading from the N-terminus, the 233-residue chain is 2,3,4,5-tetrahydropyridine-2,6-dicarboxylate N-acetyltransferase (233 aa).

It belongs to the transferase hexapeptide repeat family. DapH subfamily.

It carries out the reaction (S)-2,3,4,5-tetrahydrodipicolinate + acetyl-CoA + H2O = L-2-acetamido-6-oxoheptanedioate + CoA. Its pathway is amino-acid biosynthesis; L-lysine biosynthesis via DAP pathway; LL-2,6-diaminopimelate from (S)-tetrahydrodipicolinate (acetylase route): step 1/3. Its function is as follows. Catalyzes the transfer of an acetyl group from acetyl-CoA to tetrahydrodipicolinate. The protein is 2,3,4,5-tetrahydropyridine-2,6-dicarboxylate N-acetyltransferase of Leuconostoc mesenteroides subsp. mesenteroides (strain ATCC 8293 / DSM 20343 / BCRC 11652 / CCM 1803 / JCM 6124 / NCDO 523 / NBRC 100496 / NCIMB 8023 / NCTC 12954 / NRRL B-1118 / 37Y).